Consider the following 635-residue polypeptide: Probable potassium transport system protein Kup (635 aa).

Transmembrane regions (helical) follow at residues 22 to 42 (LVIG…LYTL), 59 to 79 (VLGI…LKYV), 111 to 131 (MYVV…DGVI), 148 to 168 (APKL…MLFL), 180 to 200 (AFGP…VYNM), 216 to 236 (VLFF…VVLA), 259 to 279 (WQFV…ALVL), 297 to 317 (ALYP…QALI), 349 to 369 (IYVP…VVGF), 378 to 398 (AYGV…VIYA), 404 to 424 (VPAP…CAFF), and 428 to 448 (IIKF…LFTL).

Belongs to the HAK/KUP transporter (TC 2.A.72) family.

It is found in the cell inner membrane. It catalyses the reaction K(+)(in) + H(+)(in) = K(+)(out) + H(+)(out). Functionally, transport of potassium into the cell. Likely operates as a K(+):H(+) symporter. This chain is Probable potassium transport system protein Kup, found in Xanthomonas oryzae pv. oryzae (strain KACC10331 / KXO85).